The following is a 692-amino-acid chain: Polyribonucleotide nucleotidyltransferase (692 aa).

Positions 484 and 490 each coordinate Mg(2+). Residues 551-614 (PKYFIHKISQ…ALVERVKSIT (64 aa)) enclose the KH domain. In terms of domain architecture, S1 motif spans 620–688 (GAVYTGKVKT…NRGRIRLSRK (69 aa)).

The protein belongs to the polyribonucleotide nucleotidyltransferase family. Requires Mg(2+) as cofactor.

It localises to the cytoplasm. It catalyses the reaction RNA(n+1) + phosphate = RNA(n) + a ribonucleoside 5'-diphosphate. Involved in mRNA degradation. Catalyzes the phosphorolysis of single-stranded polyribonucleotides processively in the 3'- to 5'-direction. This Desulfotalea psychrophila (strain LSv54 / DSM 12343) protein is Polyribonucleotide nucleotidyltransferase.